The primary structure comprises 538 residues: Syncytin-2 (538 aa).

The N-terminal stretch at 1–15 (MGLLLLVLILTPSLA) is a signal peptide. Residues 16–478 (AYRHPDFPLL…GWLNWEGTWK (463 aa)) lie on the Extracellular side of the membrane. Positions 43 to 46 (CWLC) match the CXXC motif. 3 cysteine pairs are disulfide-bonded: Cys-43/Cys-46, Cys-43/Cys-439, and Cys-431/Cys-438. Residues Asn-133, Asn-146, Asn-177, Asn-220, Asn-241, Asn-247, Asn-312, and Asn-332 are each glycosylated (N-linked (GlcNAc...) asparagine). The tract at residues 354 to 374 (FIPLLAGLGILAGTGTGIAGI) is fusion peptide. Residues 414 to 430 (LQNRRGLDMLTAAQGGI) carry the CKS-17 motif. Residues 431–439 (CLALDEKCC) carry the CX6CC motif. N-linked (GlcNAc...) asparagine glycosylation is present at Asn-443. Residues 479-499 (WFSWVLPLTGPLVSLLLLLLF) form a helical membrane-spanning segment. The Cytoplasmic segment spans residues 500-538 (GPCLLNLITQFVSSRLQAIKLQTNLSAGRHPRNIQESPF).

It belongs to the gamma type-C retroviral envelope protein family. HERV class-I FRD env subfamily. As to quaternary structure, the surface and transmembrane proteins form a heterodimer. They are attached by non-covalent interactions or by a labile interchain disulfide bond. In terms of processing, specific enzymatic cleavages in vivo yield the mature SU and TM proteins. Post-translationally, the CXXC motif is highly conserved across a broad range of retroviral envelope proteins. It is thought to participate in the formation of a labile disulfide bond possibly with the CX6CC motif present in the transmembrane protein.

The protein resides in the virion. It is found in the cell membrane. This endogenous retroviral envelope protein has retained its original fusogenic properties and participates in trophoblast fusion and the formation of a syncytium during placenta morphogenesis. The interaction with MFSD2A is apparently important for this process. In terms of biological role, endogenous envelope proteins may have kept, lost or modified their original function during evolution but this one can still make pseudotypes with MLV, HIV-1 or SIV-1 virions and confer infectivity. Retroviral envelope proteins mediate receptor recognition and membrane fusion during early infection. The surface protein mediates receptor recognition, while the transmembrane protein anchors the envelope heterodimer to the viral membrane through one transmembrane domain. The other hydrophobic domain, called fusion peptide, mediates fusion of the viral membrane with the target cell membrane. The sequence is that of Syncytin-2 (ERVFRD-1) from Pan troglodytes (Chimpanzee).